Consider the following 322-residue polypeptide: Malate dehydrogenase (322 aa).

Residues 10 to 15 (GSGQIG) and Asp34 contribute to the NAD(+) site. The substrate site is built by Arg83 and Arg89. NAD(+)-binding positions include Asn96 and 119–121 (ITN). Substrate contacts are provided by Asn121 and Arg152. His176 functions as the Proton acceptor in the catalytic mechanism.

It belongs to the LDH/MDH superfamily. MDH type 3 family.

It catalyses the reaction (S)-malate + NAD(+) = oxaloacetate + NADH + H(+). Catalyzes the reversible oxidation of malate to oxaloacetate. The polypeptide is Malate dehydrogenase (Nitrobacter hamburgensis (strain DSM 10229 / NCIMB 13809 / X14)).